Reading from the N-terminus, the 1359-residue chain is Nuclear protein STH1/NPS1 (1359 aa).

Phosphoserine is present on S38. The 77-residue stretch at 307–383 folds into the HSA domain; the sequence is LERQQLLEKR…AKQRLAALKS (77 aa). The Helicase ATP-binding domain occupies 482–647; it reads VSLYNNHLNG…WALLNFVLPK (166 aa). 495–502 lines the ATP pocket; sequence DEMGLGKT. The short motif at 597–600 is the DEGH box element; it reads DEGH. The Helicase C-terminal domain maps to 795-956; it reads LLDRVLPKFK…NKSTAEEQEA (162 aa). Residues 1090–1246 form a disordered region; sequence RERRRLRQNG…TAAKKTKTKS (157 aa). Positions 1108–1126 are enriched in polar residues; it reads LENTPEASETSLIENNSFT. 2 stretches are compositionally biased toward basic residues: residues 1143–1154 and 1198–1210; these read RSKRRSSRKKRT and KKKK…KIKL. Over residues 1219 to 1232 the composition is skewed to basic and acidic residues; that stretch reads NDGKRAEEKPESKS. Over residues 1233–1246 the composition is skewed to basic residues; sequence PAKKTAAKKTKTKS. One can recognise a Bromo domain in the interval 1257–1357; it reads KLVEEMREQL…EFTDEWFKEH (101 aa).

This sequence belongs to the SNF2/RAD54 helicase family. In terms of assembly, interacts directly with SFH1, CSE4, histones H3, H4 and H2B, and via its N-terminus, with RSC8. Interacts with LDB7, NPL6 and RTT102. Component of the two forms of the RSC complex composed of at least either RSC1 or RSC2, and ARP7, ARP9, LDB7, NPL6, RSC3, RSC30, RSC4, RSC58, RSC6, RSC8, RSC9, SFH1, STH1, HTL1 and probably RTT102. The complexes interact with histone and histone variant components of centromeric chromatin.

It localises to the nucleus. The catalysed reaction is ATP + H2O = ADP + phosphate + H(+). In terms of biological role, catalytic component of the chromatin structure-remodeling complex (RSC), which is involved in transcription regulation and nucleosome positioning. RSC is responsible for the transfer of a histone octamer from a nucleosome core particle to naked DNA. The reaction requires ATP and involves an activated RSC-nucleosome intermediate. Remodeling reaction also involves DNA translocation, DNA twist and conformational change. As a reconfigurer of centromeric and flanking nucleosomes, RSC complex is required both for proper kinetochore function in chromosome segregation and, via a PKC1-dependent signaling pathway, for organization of the cellular cytoskeleton. This subunit is the essential ATPase of the complex. It is a DNA translocase capable of nucleosome remodeling. Required for full expression of early meiotic genes. Essential for mitotic growth and repression of CHA1 expression. Also involved in G2 phase control. The sequence is that of Nuclear protein STH1/NPS1 (STH1) from Saccharomyces cerevisiae (strain ATCC 204508 / S288c) (Baker's yeast).